Reading from the N-terminus, the 961-residue chain is Retinoblastoma-related protein 1 (961 aa).

Residues 404-606 (TPVSTAMTTA…EKGSSMYNSL (203 aa)) are domain A. Residues 404–819 (TPVSTAMTTA…NEMFIPSVKP (416 aa)) are pocket. A spacer region spans residues 607 to 728 (AVAKPSLAAE…PGGGGETCAE (122 aa)). The tract at residues 729–819 (TAINVFFGKI…NEMFIPSVKP (91 aa)) is domain B. The segment at 829-856 (NAEKNNHNDGQGPASPKPSPFPKLPDMS) is disordered.

The protein belongs to the retinoblastoma protein (RB) family.

It localises to the nucleus. Functionally, regulator of biological processes that recruits a histone deacetylase to control gene transcription. May play a role in the entry into mitosis, negatively regulating the cell proliferation. Formation of stable complexes with geminiviridae replication-associated proteins may create a cellular environment which favors viral DNA replication. The sequence is that of Retinoblastoma-related protein 1 (RB1) from Nicotiana tabacum (Common tobacco).